The sequence spans 58 residues: UPF0391 membrane protein COXBURSA331_A2131 (58 aa).

The next 2 membrane-spanning stretches (helical) occupy residues 3 to 23 (FWVL…FTGI) and 30 to 50 (IAKI…IAML).

The protein belongs to the UPF0391 family.

It localises to the cell membrane. The protein is UPF0391 membrane protein COXBURSA331_A2131 of Coxiella burnetii (strain RSA 331 / Henzerling II).